Here is a 115-residue protein sequence, read N- to C-terminus: U3-lycotoxin-Ls1h (115 aa).

A signal peptide spans 1-20 (MKFVLLFGVFLVTLFSYSSA). A propeptide spanning residues 21-44 (EMLDDFDQADEDELLSLIEKEEAR) is cleaved from the precursor. Cystine bridges form between cysteine 48–cysteine 63, cysteine 55–cysteine 72, cysteine 62–cysteine 87, and cysteine 74–cysteine 85.

The protein belongs to the neurotoxin 19 (CSTX) family. 01 subfamily. As to expression, expressed by the venom gland.

It localises to the secreted. This chain is U3-lycotoxin-Ls1h, found in Lycosa singoriensis (Wolf spider).